The sequence spans 149 residues: Large ribosomal subunit protein bL9 (149 aa).

It belongs to the bacterial ribosomal protein bL9 family.

In terms of biological role, binds to the 23S rRNA. The protein is Large ribosomal subunit protein bL9 of Christiangramia forsetii (strain DSM 17595 / CGMCC 1.15422 / KT0803) (Gramella forsetii).